Consider the following 162-residue polypeptide: Neuritin-like protein (162 aa).

The N-terminal stretch at 1–32 is a signal peptide; the sequence is MMCNCCHCHWRRRCQRLPCALTLLLLLPLAVA. A lipid anchor (GPI-anchor amidated alanine) is attached at Ala136. Positions 137-162 are cleaved as a propeptide — removed in mature form; that stretch reads PALAPAPAPVLLAAALALACLLGPLA.

This sequence belongs to the neuritin family.

It localises to the cell membrane. The sequence is that of Neuritin-like protein (Nrn1l) from Mus musculus (Mouse).